Here is a 152-residue protein sequence, read N- to C-terminus: Small ribosomal subunit protein uS13 (152 aa).

This sequence belongs to the universal ribosomal protein uS13 family. In terms of assembly, part of the 30S ribosomal subunit. Forms a loose heterodimer with protein S19. Forms two bridges to the 50S subunit in the 70S ribosome.

Its function is as follows. Located at the top of the head of the 30S subunit, it contacts several helices of the 16S rRNA. In the 70S ribosome it contacts the 23S rRNA (bridge B1a) and protein L5 of the 50S subunit (bridge B1b), connecting the 2 subunits; these bridges are implicated in subunit movement. This is Small ribosomal subunit protein uS13 from Pyrobaculum arsenaticum (strain DSM 13514 / JCM 11321 / PZ6).